We begin with the raw amino-acid sequence, 417 residues long: Putative F-box protein At3g58950 (417 aa).

The region spanning 1 to 53 (MDLFSSLPDEVLCHILSFLTTKEAALASVVSKRWRNQFALVPNLDIDEEGKRE) is the F-box domain.

The chain is Putative F-box protein At3g58950 from Arabidopsis thaliana (Mouse-ear cress).